We begin with the raw amino-acid sequence, 419 residues long: Tyrosine--tRNA ligase (419 aa).

Y34 is an L-tyrosine binding site. A 'HIGH' region motif is present at residues 39-48 (PSGDSMHIGH). L-tyrosine is bound by residues Y168 and Q172. The 'KMSKS' region signature appears at 230 to 234 (KFGKS). An ATP-binding site is contributed by K233. The region spanning 352-418 (VNLVDWLVTL…GKKKYFLVSY (67 aa)) is the S4 RNA-binding domain.

Belongs to the class-I aminoacyl-tRNA synthetase family. TyrS type 1 subfamily. In terms of assembly, homodimer.

It localises to the cytoplasm. It carries out the reaction tRNA(Tyr) + L-tyrosine + ATP = L-tyrosyl-tRNA(Tyr) + AMP + diphosphate + H(+). Its function is as follows. Catalyzes the attachment of tyrosine to tRNA(Tyr) in a two-step reaction: tyrosine is first activated by ATP to form Tyr-AMP and then transferred to the acceptor end of tRNA(Tyr). The sequence is that of Tyrosine--tRNA ligase from Listeria innocua serovar 6a (strain ATCC BAA-680 / CLIP 11262).